A 293-amino-acid chain; its full sequence is Ubiquinone biosynthesis protein COQ9-B, mitochondrial (293 aa).

A disordered region spans residues 21–73 (LRSDDQKQPPFSSSSTHAETPEHAEEQYQQQQSPPRYTDQAGEESEDYESEEQ). The segment covering 29–38 (PPFSSSSTHA) has biased composition (polar residues). Acidic residues predominate over residues 61-72 (AGEESEDYESEE). Arg-219 is a binding site for a 1,2-diacylglycero-3-phosphoethanolamine.

The protein belongs to the COQ9 family. As to quaternary structure, homodimer. Heterodimer; two heterodimers of COQ7:COQ9 come together on the same side of the lipid pseudo-bilayer and form a curved tetramer with a hydrophobic surface suitable for membrane interaction. These two tetramers assemble into a soluble octamer with a pseudo-bilayer of lipids captured within. Interacts with COQ7; this interaction allows ubiquinone (CoQ) isoprene intermediates presentation to COQ7 and facilitates the COQ7-mediated hydroxylase step.

It localises to the mitochondrion. It functions in the pathway cofactor biosynthesis; ubiquinone biosynthesis. Functionally, membrane-associated protein that warps the membrane surface to access and bind aromatic isoprenes with high specificity, including ubiquinone (CoQ) isoprene intermediates and presents them directly to COQ7, therefore facilitating the COQ7-mediated hydroxylase step. Participates in the biosynthesis of coenzyme Q, also named ubiquinone, an essential lipid-soluble electron transporter for aerobic cellular respiration. The protein is Ubiquinone biosynthesis protein COQ9-B, mitochondrial (coq9-b) of Xenopus laevis (African clawed frog).